A 313-amino-acid polypeptide reads, in one-letter code: Olfactory receptor 10G3 (313 aa).

Residues Met-1–Thr-25 lie on the Extracellular side of the membrane. Asn-5 carries an N-linked (GlcNAc...) asparagine glycan. Residues Leu-26–Leu-46 form a helical membrane-spanning segment. The Cytoplasmic segment spans residues Ile-47–Arg-54. The helical transmembrane segment at Leu-55–Ser-76 threads the bilayer. At Ile-77 to Ala-100 the chain is on the extracellular side. Asn-85 is a glycosylation site (N-linked (GlcNAc...) asparagine). Residues Cys-98 and Cys-190 are joined by a disulfide bond. The chain crosses the membrane as a helical span at residues Gln-101–Tyr-121. Over Asp-122–Lys-140 the chain is Cytoplasmic. A helical membrane pass occupies residues Leu-141–Ala-161. The Extracellular segment spans residues Ile-162–Leu-198. A helical transmembrane segment spans residues Val-199 to Ser-218. Topologically, residues Tyr-219 to Ala-238 are cytoplasmic. Residues Phe-239–Ile-259 form a helical membrane-spanning segment. Residues Tyr-260–Asp-270 lie on the Extracellular side of the membrane. The chain crosses the membrane as a helical span at residues Gly-271–Leu-291. The Cytoplasmic segment spans residues Arg-292–Val-313.

It belongs to the G-protein coupled receptor 1 family.

The protein localises to the cell membrane. Functionally, odorant receptor. This is Olfactory receptor 10G3 (OR10G3) from Homo sapiens (Human).